A 562-amino-acid chain; its full sequence is Probable malate:quinone oxidoreductase (562 aa).

Positions 535–562 are disordered; sequence SATPADPTIAPKNQHSTTYNANSEMQAL. A compositionally biased stretch (polar residues) spans 545-562; that stretch reads PKNQHSTTYNANSEMQAL.

It belongs to the MQO family. FAD is required as a cofactor.

It catalyses the reaction (S)-malate + a quinone = a quinol + oxaloacetate. Its pathway is carbohydrate metabolism; tricarboxylic acid cycle; oxaloacetate from (S)-malate (quinone route): step 1/1. This is Probable malate:quinone oxidoreductase from Xylella fastidiosa (strain M23).